The chain runs to 379 residues: Homoserine O-acetyltransferase (379 aa).

The 305-residue stretch at 52–356 (NVVVVLHALT…VYGHDGFLVE (305 aa)) folds into the AB hydrolase-1 domain. The active-site Nucleophile is the serine 157. Residue arginine 227 coordinates substrate. Active-site residues include aspartate 320 and histidine 350. Aspartate 351 lines the substrate pocket.

This sequence belongs to the AB hydrolase superfamily. MetX family. Homodimer.

It localises to the cytoplasm. It catalyses the reaction L-homoserine + acetyl-CoA = O-acetyl-L-homoserine + CoA. Its pathway is amino-acid biosynthesis; L-methionine biosynthesis via de novo pathway; O-acetyl-L-homoserine from L-homoserine: step 1/1. Its function is as follows. Transfers an acetyl group from acetyl-CoA to L-homoserine, forming acetyl-L-homoserine. In Mycobacterium bovis (strain ATCC BAA-935 / AF2122/97), this protein is Homoserine O-acetyltransferase.